The sequence spans 211 residues: MPDDFKIPRATLKRLPLYYRFVSILKGKGIDRVNSKTISEALQIDSATIRRDFSYFGELGKKGYGYNIDSMLEFFKSELSESDQIKIAIIGIGNLGRALLTYNFSIHDEMTITEAFDIRPDIIGENIGDVVVKHSDDIKTTLESEDIDVVILTTPDNVAQQVADELVKAGVKGILNFTPRRIKTPQDVQVHHIDFGIELQSLLFFMKNYSK.

The H-T-H motif DNA-binding region spans 17–56 (LYYRFVSILKGKGIDRVNSKTISEALQIDSATIRRDFSYF). 91-96 (GIGNLG) is a binding site for NAD(+).

This sequence belongs to the transcriptional regulatory Rex family. As to quaternary structure, homodimer.

It is found in the cytoplasm. In terms of biological role, modulates transcription in response to changes in cellular NADH/NAD(+) redox state. In Staphylococcus epidermidis (strain ATCC 35984 / DSM 28319 / BCRC 17069 / CCUG 31568 / BM 3577 / RP62A), this protein is Redox-sensing transcriptional repressor Rex.